A 303-amino-acid polypeptide reads, in one-letter code: Methionyl-tRNA formyltransferase (303 aa).

110 to 113 is a (6S)-5,6,7,8-tetrahydrofolate binding site; the sequence is SLLP.

The protein belongs to the Fmt family.

The catalysed reaction is L-methionyl-tRNA(fMet) + (6R)-10-formyltetrahydrofolate = N-formyl-L-methionyl-tRNA(fMet) + (6S)-5,6,7,8-tetrahydrofolate + H(+). In terms of biological role, attaches a formyl group to the free amino group of methionyl-tRNA(fMet). The formyl group appears to play a dual role in the initiator identity of N-formylmethionyl-tRNA by promoting its recognition by IF2 and preventing the misappropriation of this tRNA by the elongation apparatus. The chain is Methionyl-tRNA formyltransferase from Campylobacter lari (strain RM2100 / D67 / ATCC BAA-1060).